The primary structure comprises 196 residues: MTRLGKQFFTAPTLALTERLLGKIFVRITPSGTVLKGRIVETEAYLGHNDEACHAWRKKTERNRVMFEAPGTLYVYFSYGCHHLLNIVTEPEGTAGAVLIRAMEPVEGIPCMQERRQTTVETALMSGPAKLTSALGVERSSSGRDLFGNEFFLLDAPSPQPSMICTSTRVGISRSRELPWRKYLADSPHVSKGRPS.

The protein belongs to the DNA glycosylase MPG family.

The protein is Putative 3-methyladenine DNA glycosylase of Chlorobium luteolum (strain DSM 273 / BCRC 81028 / 2530) (Pelodictyon luteolum).